The chain runs to 240 residues: Adenosylcobinamide-GDP ribazoletransferase (240 aa).

5 helical membrane-spanning segments follow: residues 31 to 51 (LLYY…ASHL), 62 to 81 (ALLL…DGLA), 109 to 129 (IAVV…WVLV), 133 to 153 (IGAQ…GLFL), and 179 to 199 (VLLV…LLAL).

This sequence belongs to the CobS family. Requires Mg(2+) as cofactor.

The protein localises to the cell inner membrane. It carries out the reaction alpha-ribazole + adenosylcob(III)inamide-GDP = adenosylcob(III)alamin + GMP + H(+). It catalyses the reaction alpha-ribazole 5'-phosphate + adenosylcob(III)inamide-GDP = adenosylcob(III)alamin 5'-phosphate + GMP + H(+). It participates in cofactor biosynthesis; adenosylcobalamin biosynthesis; adenosylcobalamin from cob(II)yrinate a,c-diamide: step 7/7. In terms of biological role, joins adenosylcobinamide-GDP and alpha-ribazole to generate adenosylcobalamin (Ado-cobalamin). Also synthesizes adenosylcobalamin 5'-phosphate from adenosylcobinamide-GDP and alpha-ribazole 5'-phosphate. The polypeptide is Adenosylcobinamide-GDP ribazoletransferase (Pseudomonas putida (strain ATCC 700007 / DSM 6899 / JCM 31910 / BCRC 17059 / LMG 24140 / F1)).